The sequence spans 362 residues: MLLELALWLGQDIRGFNVFGYITLRTVLAALTALAISLTAGPGVIRWLAAKKIGQAVRDDGPKSHLTKAGTPTMGGALILIAIGITILLWGDLRNAYVWVTLLVTLGFGAVGWVDDWRKVVHRDPKGLASRWKYFWTSAIALGASIFLGLSATTPAETELIVPFFKAVAYPLGVYGFIALTYFVINGTSHAVNLTDGLDGLAIMPTVMVAGALAIFAYVAGHAGFSKYLGVPYIAGAGELAVFCGAICGAGLGFLWFNAYPAEVFMGDVGALALGAALGTIAVVVRQEIVLFIMGGLFVAETLSVMVQVLYFKASGGKRIFRMAPLHHHYELSGWKETQVVVRFWIITLMLVLFGLSTLKLR.

The next 10 membrane-spanning stretches (helical) occupy residues 18-38 (VFGY…AISL), 73-93 (TMGG…WGDL), 97-117 (YVWV…VDDW), 134-154 (YFWT…SATT), 160-180 (LIVP…FIAL), 200-220 (GLAI…AYVA), 237-257 (AGEL…FLWF), 264-284 (VFMG…IAVV), 289-309 (IVLF…MVQV), and 339-359 (QVVV…LSTL).

This sequence belongs to the glycosyltransferase 4 family. MraY subfamily. Mg(2+) is required as a cofactor.

The protein resides in the cell inner membrane. It catalyses the reaction UDP-N-acetyl-alpha-D-muramoyl-L-alanyl-gamma-D-glutamyl-meso-2,6-diaminopimeloyl-D-alanyl-D-alanine + di-trans,octa-cis-undecaprenyl phosphate = di-trans,octa-cis-undecaprenyl diphospho-N-acetyl-alpha-D-muramoyl-L-alanyl-D-glutamyl-meso-2,6-diaminopimeloyl-D-alanyl-D-alanine + UMP. Its pathway is cell wall biogenesis; peptidoglycan biosynthesis. Functionally, catalyzes the initial step of the lipid cycle reactions in the biosynthesis of the cell wall peptidoglycan: transfers peptidoglycan precursor phospho-MurNAc-pentapeptide from UDP-MurNAc-pentapeptide onto the lipid carrier undecaprenyl phosphate, yielding undecaprenyl-pyrophosphoryl-MurNAc-pentapeptide, known as lipid I. The protein is Phospho-N-acetylmuramoyl-pentapeptide-transferase of Azoarcus sp. (strain BH72).